We begin with the raw amino-acid sequence, 274 residues long: 2,3,4,5-tetrahydropyridine-2,6-dicarboxylate N-succinyltransferase (274 aa).

2 residues coordinate substrate: Arg104 and Asp141.

Belongs to the transferase hexapeptide repeat family. In terms of assembly, homotrimer.

It localises to the cytoplasm. It carries out the reaction (S)-2,3,4,5-tetrahydrodipicolinate + succinyl-CoA + H2O = (S)-2-succinylamino-6-oxoheptanedioate + CoA. The protein operates within amino-acid biosynthesis; L-lysine biosynthesis via DAP pathway; LL-2,6-diaminopimelate from (S)-tetrahydrodipicolinate (succinylase route): step 1/3. The protein is 2,3,4,5-tetrahydropyridine-2,6-dicarboxylate N-succinyltransferase of Sodalis glossinidius (strain morsitans).